The sequence spans 501 residues: Acetylcholine receptor subunit beta (501 aa).

An N-terminal signal peptide occupies residues 1-23; sequence MALGALLLILGILGTPLAPGARG. Residues 24–244 lie on the Extracellular side of the membrane; sequence SEAEGQLLKK…VIFYLIIRRK (221 aa). The cysteines at positions 151 and 165 are disulfide-linked. An N-linked (GlcNAc...) asparagine glycan is attached at N164. Helical transmembrane passes span 245–269, 277–295, and 311–332; these read PLFYLVNVIAPCILITLLAIFVFYL, MGLSIFALLTLTVFLLLLA, and YLMFTMILVTFSVILSVVVLNL. The Cytoplasmic portion of the chain corresponds to 333 to 469; sequence HHRSPHTHQM…WQFVAMVVDR (137 aa). The tract at residues 362–381 is disordered; sequence RPKPERDQLPEPHHSFSPRS. The span at 363 to 375 shows a compositional bias: basic and acidic residues; it reads PKPERDQLPEPHH. At Y390 the chain carries Phosphotyrosine; by Tyr-kinases. Residues 470 to 488 form a helical membrane-spanning segment; sequence LFLWTFIVFTSVGTLVIFL.

Belongs to the ligand-gated ion channel (TC 1.A.9) family. Acetylcholine receptor (TC 1.A.9.1) subfamily. Beta-1/CHRNB1 sub-subfamily. Pentamer of two alpha chains, and one each of the beta, delta, and gamma (in immature muscle) or epsilon (in mature muscle) chains. The muscle heteropentamer composed of alpha-1, beta-1, delta, epsilon subunits interacts with the alpha-conotoxin ImII.

It localises to the postsynaptic cell membrane. The protein resides in the cell membrane. It carries out the reaction K(+)(in) = K(+)(out). The enzyme catalyses Na(+)(in) = Na(+)(out). Its function is as follows. After binding acetylcholine, the AChR responds by an extensive change in conformation that affects all subunits and leads to opening of an ion-conducting channel across the plasma membrane. This chain is Acetylcholine receptor subunit beta (Chrnb1), found in Rattus norvegicus (Rat).